We begin with the raw amino-acid sequence, 232 residues long: Peptide deformylase (232 aa).

2 residues coordinate Fe cation: Cys135 and His178. Residue Glu179 is part of the active site. His182 provides a ligand contact to Fe cation.

Belongs to the polypeptide deformylase family. Fe(2+) is required as a cofactor.

The catalysed reaction is N-terminal N-formyl-L-methionyl-[peptide] + H2O = N-terminal L-methionyl-[peptide] + formate. Its function is as follows. Removes the formyl group from the N-terminal Met of newly synthesized proteins. Requires at least a dipeptide for an efficient rate of reaction. N-terminal L-methionine is a prerequisite for activity but the enzyme has broad specificity at other positions. This Deinococcus radiodurans (strain ATCC 13939 / DSM 20539 / JCM 16871 / CCUG 27074 / LMG 4051 / NBRC 15346 / NCIMB 9279 / VKM B-1422 / R1) protein is Peptide deformylase.